The following is a 2194-amino-acid chain: Glutamate synthase [NADH], amyloplastic (2194 aa).

The N-terminal 101 residues, 1-101 (MSNSLSLTFT…LYDPAFDKDS (101 aa)), are a transit peptide targeting the amyloplast. The Nucleophile role is filled by Cys102. The Glutamine amidotransferase type-2 domain occupies 102 to 503 (CGVGFVAELN…PGMMLLVDFE (402 aa)). A disordered region spans residues 1021-1045 (GGKSNTGEGGEQPSRMEPLADGSRN). 1193-1250 (LAETHQTLVANDLRGRTTLQTDGQLKTGRDVAIAALLGAEEYGFSTAPLITLGCIMMR) contacts FMN. Residues Cys1246, Cys1252, and Cys1257 each contribute to the [3Fe-4S] cluster site. NAD(+) is bound at residue 1974–1988 (GGGDTGTDCIGTSIR).

It belongs to the glutamate synthase family. Monomer. The cofactor is [3Fe-4S] cluster. FAD is required as a cofactor. FMN serves as cofactor. In terms of tissue distribution, expressed in infected cells in root nodules. Barely detected in roots and stems.

The protein resides in the plastid. Its subcellular location is the amyloplast. The enzyme catalyses 2 L-glutamate + NAD(+) = L-glutamine + 2-oxoglutarate + NADH + H(+). It participates in amino-acid biosynthesis; L-glutamate biosynthesis via GLT pathway; L-glutamate from 2-oxoglutarate and L-glutamine (NAD(+) route): step 1/1. Its pathway is energy metabolism; nitrogen metabolism. Inhibited by malate, citrate, glutamate, NAD(+) and azaserine, but not by 2-2' dipyridil and N-ethylmaleimide. Functionally, required for the assimilation of symbiotically fixed nitrogen into amino acids in root nodules. This Medicago sativa (Alfalfa) protein is Glutamate synthase [NADH], amyloplastic.